Reading from the N-terminus, the 601-residue chain is FAD-binding monooxygenase stcW (601 aa).

FAD-binding positions include 42–43 (FS), Glu64, Trp73, Asp84, Tyr90, and Val133.

This sequence belongs to the FAD-binding monooxygenase family. FAD is required as a cofactor.

It functions in the pathway mycotoxin biosynthesis; sterigmatocystin biosynthesis. Functionally, FAD-binding monooxygenase; part of the gene cluster that mediates the biosynthesis of sterigmatocystin (ST), a polyketide-derived furanocoumarin which is part of the most toxic and carcinogenic compounds among the known mycotoxins. The first step in the biosynthesis of sterigmatocystin is the production of hexanoate by the fatty acid synthase (FAS) units stcJ and stcK. The polyketide backbone is assembled by the non-reducing polyketide synthase stcA by condensation of the starter hexanoyl-CoA and 7 malonyl-CoA extender units followed by cyclization and release of norsolorinic acid. Norsolorinic acid is the first stable intermediate in the biosynthesis of sterigmatocystin and is converted into averantin (AVN) by the ketoreductase stcE which reduces the hexanoate ketone to an alcohol. Averantin is then oxidized into 5'-hydroxyaverantin (HAVN) by the cytochrome P450 monooxygenase stcF. 5'-hydroxyaverantin is further converted to 5'-oxyaverantin (OAVN) by the 5'-hydroxyaverantin dehydrogenase stcG. The next step is the conversion of OAVN into averufin (AVF) which is catalyzed by a yet to be identified enzyme. The cytochrome P450 monooxygenase stcB and the flavin-binding monooxygenase stcW are both required for the conversion of averufin to 1-hydroxyversicolorone. The esterase stcI probably catalyzes the formation of versiconal hemiacetal acetate from 1-hydroxyversicolorone. The oxydoreductase stcN then probably catalyzes the biosynthetic step from versiconal to versicolorin B (VERB). The next step is performed by the versicolorin B desaturase stcL to produce versicolorin A (VERA). The ketoreductase stcU and the cytochrome P450 monooxygenase stcS are involved in the conversion of versicolorin A to demethylsterigmatocystin. The Baeyer-Villiger oxidas stcQ and the reductase stcR might be involved in the biosynthetic step from versicolorin A to demethylsterigmatocystin. The final step in the biosynthesis of sterigmatocystin is the methylation of demethylsterigmatocystin catalyzed by the methyltransferase stcP. The polypeptide is FAD-binding monooxygenase stcW (Emericella nidulans (strain FGSC A4 / ATCC 38163 / CBS 112.46 / NRRL 194 / M139) (Aspergillus nidulans)).